Reading from the N-terminus, the 906-residue chain is Probable helicase HelY (906 aa).

The 159-residue stretch at 26–184 folds into the Helicase ATP-binding domain; sequence CSALERGHGV…WIQTVRGDTT (159 aa). 39–46 is a binding site for ATP; that stretch reads APTGAGKT. Residues 132–135 carry the DEVH box motif; it reads DEVH. The Helicase C-terminal domain occupies 259 to 463; that stretch reads GRPEVIAKLD…SYNMTINLVH (205 aa).

This sequence belongs to the helicase family. SKI2 subfamily.

This is Probable helicase HelY (helY) from Mycobacterium tuberculosis (strain CDC 1551 / Oshkosh).